The chain runs to 384 residues: Galactokinase (384 aa).

35-38 is a substrate binding site; that stretch reads EHTD. ATP contacts are provided by residues Ser69 and 125–131; that span reads GAGLSSS. Positions 131 and 163 each coordinate Mg(2+). The active-site Proton acceptor is Asp175. Substrate is bound at residue Tyr224.

This sequence belongs to the GHMP kinase family. GalK subfamily.

Its subcellular location is the cytoplasm. The enzyme catalyses alpha-D-galactose + ATP = alpha-D-galactose 1-phosphate + ADP + H(+). Its pathway is carbohydrate metabolism; galactose metabolism. Catalyzes the transfer of the gamma-phosphate of ATP to D-galactose to form alpha-D-galactose-1-phosphate (Gal-1-P). The polypeptide is Galactokinase (Aliivibrio fischeri (strain MJ11) (Vibrio fischeri)).